Here is a 242-residue protein sequence, read N- to C-terminus: UPF0309 protein BOV_A0853 (242 aa).

The 180-residue stretch at 30–209 (AADLIAAAAR…FADVAARLVG (180 aa)) folds into the SIS domain.

Belongs to the UPF0309 family.

This Brucella ovis (strain ATCC 25840 / 63/290 / NCTC 10512) protein is UPF0309 protein BOV_A0853.